The following is a 215-amino-acid chain: Urease accessory protein UreG (215 aa).

11–18 (GPVGAGKS) provides a ligand contact to GTP.

The protein belongs to the SIMIBI class G3E GTPase family. UreG subfamily. Homodimer. UreD, UreF and UreG form a complex that acts as a GTP-hydrolysis-dependent molecular chaperone, activating the urease apoprotein by helping to assemble the nickel containing metallocenter of UreC. The UreE protein probably delivers the nickel.

It localises to the cytoplasm. Its function is as follows. Facilitates the functional incorporation of the urease nickel metallocenter. This process requires GTP hydrolysis, probably effectuated by UreG. This Cenarchaeum symbiosum (strain A) protein is Urease accessory protein UreG.